A 211-amino-acid polypeptide reads, in one-letter code: Imidazole glycerol phosphate synthase subunit HisH (211 aa).

The 209-residue stretch at 3–211 (VIAVIDYDMG…VSQIKAPVLV (209 aa)) folds into the Glutamine amidotransferase type-1 domain. Cys-81 functions as the Nucleophile in the catalytic mechanism. Active-site residues include His-186 and Glu-188.

As to quaternary structure, heterodimer of HisH and HisF.

The protein resides in the cytoplasm. The enzyme catalyses 5-[(5-phospho-1-deoxy-D-ribulos-1-ylimino)methylamino]-1-(5-phospho-beta-D-ribosyl)imidazole-4-carboxamide + L-glutamine = D-erythro-1-(imidazol-4-yl)glycerol 3-phosphate + 5-amino-1-(5-phospho-beta-D-ribosyl)imidazole-4-carboxamide + L-glutamate + H(+). It catalyses the reaction L-glutamine + H2O = L-glutamate + NH4(+). It functions in the pathway amino-acid biosynthesis; L-histidine biosynthesis; L-histidine from 5-phospho-alpha-D-ribose 1-diphosphate: step 5/9. In terms of biological role, IGPS catalyzes the conversion of PRFAR and glutamine to IGP, AICAR and glutamate. The HisH subunit catalyzes the hydrolysis of glutamine to glutamate and ammonia as part of the synthesis of IGP and AICAR. The resulting ammonia molecule is channeled to the active site of HisF. This chain is Imidazole glycerol phosphate synthase subunit HisH, found in Cyanothece sp. (strain PCC 7425 / ATCC 29141).